The primary structure comprises 63 residues: Large ribosomal subunit protein bL35 (63 aa).

The protein belongs to the bacterial ribosomal protein bL35 family.

The protein is Large ribosomal subunit protein bL35 of Campylobacter concisus (strain 13826).